The primary structure comprises 258 residues: NAD kinase (258 aa).

The Proton acceptor role is filled by Asp51. Residues 51 to 52 (DG), Lys56, 119 to 120 (ND), Lys130, Asp149, 160 to 165 (TAYSLS), and Ala184 contribute to the NAD(+) site.

This sequence belongs to the NAD kinase family. A divalent metal cation is required as a cofactor.

It localises to the cytoplasm. The enzyme catalyses NAD(+) + ATP = ADP + NADP(+) + H(+). Functionally, involved in the regulation of the intracellular balance of NAD and NADP, and is a key enzyme in the biosynthesis of NADP. Catalyzes specifically the phosphorylation on 2'-hydroxyl of the adenosine moiety of NAD to yield NADP. This chain is NAD kinase, found in Thermotoga petrophila (strain ATCC BAA-488 / DSM 13995 / JCM 10881 / RKU-1).